The primary structure comprises 1321 residues: C-Jun-amino-terminal kinase-interacting protein 4 (1321 aa).

The residue at position 1 (Met1) is an N-acetylmethionine. The 89-residue stretch at Val7–Leu95 folds into the RH1 domain. Positions Ala66–Met166 form a coiled coil. 5 positions are modified to phosphoserine: Ser109, Ser183, Ser185, Ser194, and Ser203. The disordered stretch occupies residues Ser203–Thr292. Residue Thr217 is modified to Phosphothreonine. Over residues Glu236–Glu253 the composition is skewed to polar residues. Residues Ser238, Ser251, Ser265, Ser268, and Ser272 each carry the phosphoserine modification. Positions Asp266 to Val285 are enriched in polar residues. Thr292 is subject to Phosphothreonine. Ser311, Ser329, Ser332, and Ser347 each carry phosphoserine. A phosphothreonine mark is found at Thr348, Thr365, and Thr418. A coiled-coil region spans residues Arg408–Met534. Basic and acidic residues predominate over residues Leu473 to Asp489. Disordered regions lie at residues Leu473–Arg500 and Ser563–Pro600. In terms of domain architecture, RH2 spans Arg500–Glu571. The residue at position 586 (Thr586) is a Phosphothreonine. Ser588 bears the Phosphoserine mark. The residue at position 595 (Thr595) is a Phosphothreonine. Residues Ser705, Ser728, Ser730, Ser732, and Ser733 each carry the phosphoserine modification. Positions Ser724–Val758 form a coiled coil. The tract at residues Gly854–Val906 is disordered. Residues Ala855–Ala864 show a composition bias toward polar residues. The segment covering Met874 to Glu883 has biased composition (acidic residues). Low complexity predominate over residues Ala894–Glu903. Residue Ser1188 is modified to Phosphoserine. Positions Pro1239–Leu1266 are disordered. Thr1264 is subject to Phosphothreonine.

It belongs to the JIP scaffold family. Homodimer. The homodimer interacts with ARF6, forming a heterotetramer. Homooligomer. Interacts with MAX, MAPK14, MAP3K3, MYC, KNS2 and MAP2K4. Interaction with KNS2 is important in the formation of ternary complex with MAPK8. Interacts with NFKB1. Interacts with PIP4P1. Interacts with PIKFYVE. As to quaternary structure, interacts with MAPK8, MAPK9, MAPK10. Post-translationally, phosphorylated by MAPK8 and MAPK14. As to expression, expressed only in testis on the round spermatids of stage I, II and II. Absent in spermatogonia and spermatocyte. In terms of tissue distribution, expressed in testis and in acute myeloid leukemia (AML) patients. Expressed in testis.

The protein localises to the cytoplasm. It localises to the perinuclear region. The protein resides in the lysosome membrane. Its subcellular location is the cytoplasmic vesicle. It is found in the secretory vesicle. The protein localises to the acrosome. With respect to regulation, may play a role in spermatozoa-egg-interaction. The JNK-interacting protein (JIP) group of scaffold proteins selectively mediates JNK signaling by aggregating specific components of the MAPK cascade to form a functional JNK signaling module. Regulates lysosomal positioning by acting as an adapter protein which links PIP4P1-positive lysosomes to the dynein-dynactin complex. Assists PIKFYVE selective functionality in microtubule-based endosome-to-TGN trafficking. This is C-Jun-amino-terminal kinase-interacting protein 4 from Homo sapiens (Human).